The following is a 478-amino-acid chain: Transposase for insertion sequence element IS231D (478 aa).

This sequence belongs to the transposase 11 family.

Its function is as follows. Involved in the transposition of the insertion sequence. This is Transposase for insertion sequence element IS231D from Bacillus thuringiensis subsp. finitimus.